The sequence spans 434 residues: Septin-7 (434 aa).

Position 27 is a phosphotyrosine (Tyr27). The region spanning 44 to 313 is the Septin-type G domain; that stretch reads RGFEFTLMVV…ENYRSRKLAA (270 aa). Residues 44–314 are interaction with SEPTIN12; sequence RGFEFTLMVV…NYRSRKLAAV (271 aa). Residues 54–61 form a G1 motif region; sequence GESGLGKS. GTP is bound at residue 54 to 61; it reads GESGLGKS. Ser74 carries the post-translational modification Phosphoserine. GTP is bound by residues Thr87, Gly113, and 192-200; that span reads KADTLTPEE. A G3 motif region spans residues 110–113; that stretch reads DTPG. The G4 motif stretch occupies residues 191-194; the sequence is AKAD. Thr225 carries the phosphothreonine modification. Positions 247 and 262 each coordinate GTP. The stretch at 329–434 forms a coiled coil; sequence TKSPLAQMEE…EKNKKKGKIF (106 aa). Ser331 is subject to Phosphoserine. An N6-acetyllysine modification is found at Lys370. Positions 377–407 are enriched in basic and acidic residues; sequence QRRHEQMKKNLEAQHKGLEEKRRQFEDEKAN. A disordered region spans residues 377-434; the sequence is QRRHEQMKKNLEAQHKGLEEKRRQFEDEKANWEAQQRILEQQNSSRTLEKNKKKGKIF. Ser421 is subject to Phosphoserine. Residue Thr423 is modified to Phosphothreonine.

The protein belongs to the TRAFAC class TrmE-Era-EngA-EngB-Septin-like GTPase superfamily. Septin GTPase family. As to quaternary structure, septins polymerize into heterooligomeric protein complexes that form filaments, and associate with cellular membranes, actin filaments and microtubules. GTPase activity is required for filament formation. Filaments are assembled from asymmetrical heterotrimers, composed of SEPTIN2, SEPTIN6 and SEPTIN7 that associate head-to-head to form a hexameric unit. Within the trimer, directly interacts with SEPTIN6, while interaction with SEPTIN2 seems indirect. In the absence of SEPTIN6, forms homodimers. Interacts directly with CENPE and links CENPE to septin filaments composed of SEPTIN2, SEPTIN6 and SEPTIN7. Interacts with SEPTIN5, SEPTIN8, SEPTIN9 and SEPTIN11. Component of a septin core octameric complex consisting of SEPTIN12, SEPTIN7, SEPTIN6 and SEPTIN2 or SEPTIN4 in the order 12-7-6-2-2-6-7-12 or 12-7-6-4-4-6-7-12 and located in the sperm annulus; the SEPTIN12:SEPTIN7 association is mediated by the respective GTP-binding domains.

It localises to the cytoplasm. The protein resides in the chromosome. The protein localises to the centromere. It is found in the kinetochore. Its subcellular location is the cytoskeleton. It localises to the spindle. The protein resides in the cleavage furrow. The protein localises to the midbody. It is found in the cilium axoneme. Its subcellular location is the cell projection. It localises to the cilium. The protein resides in the flagellum. Its function is as follows. Filament-forming cytoskeletal GTPase. Required for normal organization of the actin cytoskeleton. Required for normal progress through mitosis. Involved in cytokinesis. Required for normal association of CENPE with the kinetochore. Plays a role in ciliogenesis and collective cell movements. Forms a filamentous structure with SEPTIN12, SEPTIN6, SEPTIN2 and probably SEPTIN4 at the sperm annulus which is required for the structural integrity and motility of the sperm tail during postmeiotic differentiation. This Pan troglodytes (Chimpanzee) protein is Septin-7.